A 360-amino-acid polypeptide reads, in one-letter code: DNA replication and repair protein RecF (360 aa).

An ATP-binding site is contributed by 30-37 (GHNGSGKT).

The protein belongs to the RecF family.

It is found in the cytoplasm. Functionally, the RecF protein is involved in DNA metabolism; it is required for DNA replication and normal SOS inducibility. RecF binds preferentially to single-stranded, linear DNA. It also seems to bind ATP. The polypeptide is DNA replication and repair protein RecF (Actinobacillus pleuropneumoniae serotype 7 (strain AP76)).